The chain runs to 695 residues: Elongation factor G 2 (695 aa).

The tr-type G domain maps to 5-280 (SLYRNIGIFA…AVVDYLPSPT (276 aa)). GTP-binding positions include 14–21 (AHVDAGKT), 78–82 (DTPGH), and 132–135 (NKLD).

This sequence belongs to the TRAFAC class translation factor GTPase superfamily. Classic translation factor GTPase family. EF-G/EF-2 subfamily.

It is found in the cytoplasm. In terms of biological role, catalyzes the GTP-dependent ribosomal translocation step during translation elongation. During this step, the ribosome changes from the pre-translocational (PRE) to the post-translocational (POST) state as the newly formed A-site-bound peptidyl-tRNA and P-site-bound deacylated tRNA move to the P and E sites, respectively. Catalyzes the coordinated movement of the two tRNA molecules, the mRNA and conformational changes in the ribosome. This is Elongation factor G 2 from Vibrio cholerae serotype O1 (strain ATCC 39315 / El Tor Inaba N16961).